A 906-amino-acid polypeptide reads, in one-letter code: Kinesin-like protein KIN-7G (906 aa).

Residues 26–344 (SVAVAVRFRP…LKFAHRAKHI (319 aa)) form the Kinesin motor domain. An ATP-binding site is contributed by 105 to 112 (GVTSSGKT). 3 coiled-coil regions span residues 346 to 385 (IQAT…RTGT), 733 to 814 (SDEF…GRNQ), and 839 to 875 (GDMN…LEKE). Residues 803-840 (RLSSELASGRNQRRGSHGPRGARRESHTKRYEPARRGD) are disordered. Residues 813-823 (NQRRGSHGPRG) show a composition bias toward basic residues. The segment covering 824 to 840 (ARRESHTKRYEPARRGD) has biased composition (basic and acidic residues).

This sequence belongs to the TRAFAC class myosin-kinesin ATPase superfamily. Kinesin family. KIN-7 subfamily.

In Oryza sativa subsp. japonica (Rice), this protein is Kinesin-like protein KIN-7G.